A 460-amino-acid polypeptide reads, in one-letter code: Elongation factor 1-alpha (460 aa).

At G2 the chain carries N,N,N-trimethylglycine. The residue at position 3 (K3) is an N6,N6-dimethyllysine; alternate. At K3 the chain carries N6-methyllysine; alternate. In terms of domain architecture, tr-type G spans 6–241 (KTHINVVVIG…DSIEPPKRPT (236 aa)). Residues 15–22 (GHVDSGKS) are G1. 15–22 (GHVDSGKS) lines the GTP pocket. K31 is modified (N6-methyllysine). The segment at 71 to 75 (GITID) is G2. K80 is modified (N6,N6,N6-trimethyllysine). The segment at 92 to 95 (DAPG) is G3. GTP contacts are provided by residues 92 to 96 (DAPGH) and 154 to 157 (NKMD). A G4 region spans residues 154 to 157 (NKMD). The interval 193–195 (SGF) is G5. The residue at position 317 (K317) is an N6,N6-dimethyllysine; alternate. Position 317 is an N6-methyllysine; alternate (K317). Residue K391 is modified to N6-methyllysine.

This sequence belongs to the TRAFAC class translation factor GTPase superfamily. Classic translation factor GTPase family. EF-Tu/EF-1A subfamily.

Its subcellular location is the cytoplasm. Functionally, this protein promotes the GTP-dependent binding of aminoacyl-tRNA to the A-site of ribosomes during protein biosynthesis. In Podospora anserina (Pleurage anserina), this protein is Elongation factor 1-alpha (TEF).